A 30-amino-acid polypeptide reads, in one-letter code: Thermophilic aminopeptidase 1 alpha chain (30 aa).

It belongs to the peptidase M42 family. 12 chains of two different but homologous types, alpha and beta, which can combine in various ratios. A divalent metal cation is required as a cofactor.

Functionally, metalloenzyme of broad specificity, releasing all N-terminal amino acids. The protein is Thermophilic aminopeptidase 1 alpha chain of Geobacillus stearothermophilus (Bacillus stearothermophilus).